The chain runs to 1597 residues: MGVPTKISILGRESIVADFGIWRNYVAKDLLNSCSSSTYILISDTNITPLYLDGFQKSFDDAAANLSPKPRLLTYEIPPGESSKSRETKAGIEDWMLTRQPPCGRDTVIIALGGGVIGDLIGFVAATYMRGVRFVQVPTTLLAMVDSSIGGKTAIDTPNGKNLIGAIWQPQRIYLDMEFLNTLPEREFINGMAEVIKTAAISSEEKFAALEDDAEIILAAVKSKNTPERPRFSGIEETLKRTILSSAEFKAQVVSADEREGGLRNLLNFGHSIGHAIEAILAPQVLHGECVAIGMVKEAELARHLGILNNVSVSRISKCLASYGLPTSLKDERIRKLTADKHCSVEQLITYMGVDKKNDGPKKKVVLLSAIGRTHEPRASTVSNEEIQIVLAPSIEVSPGVPKNLNVTCTPPGSKSISNRALVLAALGSGTCRLKNLLHSDDTEVMLNALERLGAATFSWENEGEVLVVNGKGGKMKASPDELYLGNAGTASRFLTTVATLAQKSSVDSSVLTGNARMKQRPIGDLVDALAANGAGVEYLENSGSLPLKIAASGGFAGGEINLAAKVSSQYVSSLLMCAPYAKKPVTLRLVGGKPISQTYIDMTTTMMRSFGIDVKKSETEEHTYHIPLGFYISPAEYIVESDASSSTYPLAVAAITGTSCTVPNIGSKSLQGDARFAVEVLRPMGCTVDQKDFSTTVTGPANGILRPLPNVDMEPMTDAFLTASVLAAVARGGGSNHTTRIFGIANQRVKECNRIKAMKDELAKFGVTCREHDDGLEIDGIDRSTLRHPSDGVYCYDDHRVAMSFSVLSLVAPQPTLILEKECVGKTWPGWWDSLAQTFKVKLDGKEVEKKTGRGGIVHLDKPAASIFIIGMRGAGKTTSGVWVSKALQRPFIDLDDELERTEGMTIPEIIKQRGWEGFREAELSLLRRVMTEKPTRYIFACGGGIVETPEARKLLIQYHKTKGNVILVMRDIKEIMDFLKIDKTRPAYVEDMMSVWLRRKPWYQECSNVQYFSRLTGLDGMAQVLGGFNRFLKVITGQVDSLAQMRSKENTFFVSLTLPDLAPAAPILKEVTLGSDAVELRVDLLKDPQSDSEIPSVDYVAEQISVLRSRTSVPLVFTIRTKAQGGRFPDDAYDAALQLYRLAIRMGSEFVDLEISFPEQLLRTVTEMKGFSKIIASHHDPKGELSWANGSWIQFYNKALQYGDVIKLVGVARSLDDNASLKKFKTWAEEKHDVPIIAINMGDKGQLSRMLNGFMTPVSHPSLPFKAAPGQLSAREIRKGLSLIGEIKSKKFAVIGNPVSASRSPAMHNALFRQMGLPHIYGTLETEDPEIVKKFIRSPDFGGASITIPLKLDIMPLLDEIAPEAVSIGAVNTIVCAPPAPDDQSQAPRLIGRNTDWQGMVRCLSDAGAYPAATPTTTSAGLVIGGGGTARAAIFALQSMGYSPIYVVGRSPDKLSSMTSTFAPDHDIRILEDVKALESLPTVAIGTIPGDKPIEPHMREILCELFDLCEKANSDAEQARGISTKRILLEMAYKPSVTSLMQLASDSGWTVLPGLEALVAQGVYQCEYWTDITPVYEDARNAVMGVQPKDDDIST.

Residues 1-384 (MGVPTKISIL…HEPRASTVSN (384 aa)) form a 3-dehydroquinate synthase region. Residues 44–46 (DTN), 81–84 (ESSK), 114–116 (GGV), and Asp-119 each bind NAD(+). Position 130 (Arg-130) interacts with 7-phospho-2-dehydro-3-deoxy-D-arabino-heptonate. 139–140 (TT) is an NAD(+) binding site. Residues Asp-146 and Lys-152 each contribute to the 7-phospho-2-dehydro-3-deoxy-D-arabino-heptonate site. Lys-161 is a binding site for NAD(+). Asn-162 serves as a coordination point for 7-phospho-2-dehydro-3-deoxy-D-arabino-heptonate. NAD(+)-binding positions include 179–182 (FLNT) and Asn-190. Glu-194 provides a ligand contact to Zn(2+). Residues 194–197 (EVIK) and Lys-250 contribute to the 7-phospho-2-dehydro-3-deoxy-D-arabino-heptonate site. The active-site Proton acceptor; for 3-dehydroquinate synthase activity is Glu-260. 7-phospho-2-dehydro-3-deoxy-D-arabino-heptonate contacts are provided by residues 264–268 (RNLLN) and His-271. His-271 contributes to the Zn(2+) binding site. Catalysis depends on His-275, which acts as the Proton acceptor; for 3-dehydroquinate synthase activity. His-287 and Lys-356 together coordinate 7-phospho-2-dehydro-3-deoxy-D-arabino-heptonate. His-287 contacts Zn(2+). The tract at residues 397–842 (VSPGVPKNLN…WDSLAQTFKV (446 aa)) is EPSP synthase. The active-site For EPSP synthase activity is Cys-824. A shikimate kinase region spans residues 866 to 1057 (ASIFIIGMRG…RSKENTFFVS (192 aa)). 872-879 (GMRGAGKT) lines the ATP pocket. The segment at 1058-1278 (LTLPDLAPAA…AAPGQLSARE (221 aa)) is 3-dehydroquinase. His-1181 acts as the Proton acceptor; for 3-dehydroquinate dehydratase activity in catalysis. Lys-1209 acts as the Schiff-base intermediate with substrate; for 3-dehydroquinate dehydratase activity in catalysis. Residues 1291–1597 (SKKFAVIGNP…VQPKDDDIST (307 aa)) are shikimate dehydrogenase.

In the N-terminal section; belongs to the sugar phosphate cyclases superfamily. Dehydroquinate synthase family. This sequence in the 2nd section; belongs to the EPSP synthase family. The protein in the 3rd section; belongs to the shikimate kinase family. It in the 4th section; belongs to the type-I 3-dehydroquinase family. In the C-terminal section; belongs to the shikimate dehydrogenase family. Homodimer. Zn(2+) is required as a cofactor.

It is found in the cytoplasm. The catalysed reaction is 7-phospho-2-dehydro-3-deoxy-D-arabino-heptonate = 3-dehydroquinate + phosphate. It catalyses the reaction 3-dehydroquinate = 3-dehydroshikimate + H2O. The enzyme catalyses shikimate + NADP(+) = 3-dehydroshikimate + NADPH + H(+). It carries out the reaction shikimate + ATP = 3-phosphoshikimate + ADP + H(+). The catalysed reaction is 3-phosphoshikimate + phosphoenolpyruvate = 5-O-(1-carboxyvinyl)-3-phosphoshikimate + phosphate. Its pathway is metabolic intermediate biosynthesis; chorismate biosynthesis; chorismate from D-erythrose 4-phosphate and phosphoenolpyruvate: step 2/7. The protein operates within metabolic intermediate biosynthesis; chorismate biosynthesis; chorismate from D-erythrose 4-phosphate and phosphoenolpyruvate: step 3/7. It functions in the pathway metabolic intermediate biosynthesis; chorismate biosynthesis; chorismate from D-erythrose 4-phosphate and phosphoenolpyruvate: step 4/7. It participates in metabolic intermediate biosynthesis; chorismate biosynthesis; chorismate from D-erythrose 4-phosphate and phosphoenolpyruvate: step 5/7. Its pathway is metabolic intermediate biosynthesis; chorismate biosynthesis; chorismate from D-erythrose 4-phosphate and phosphoenolpyruvate: step 6/7. In terms of biological role, the AROM polypeptide catalyzes 5 consecutive enzymatic reactions in prechorismate polyaromatic amino acid biosynthesis. The sequence is that of Pentafunctional AROM polypeptide from Ajellomyces dermatitidis (strain ER-3 / ATCC MYA-2586) (Blastomyces dermatitidis).